We begin with the raw amino-acid sequence, 477 residues long: Glycogen synthase (477 aa).

Residue Lys15 participates in ADP-alpha-D-glucose binding.

This sequence belongs to the glycosyltransferase 1 family. Bacterial/plant glycogen synthase subfamily.

The enzyme catalyses [(1-&gt;4)-alpha-D-glucosyl](n) + ADP-alpha-D-glucose = [(1-&gt;4)-alpha-D-glucosyl](n+1) + ADP + H(+). Its pathway is glycan biosynthesis; glycogen biosynthesis. Functionally, synthesizes alpha-1,4-glucan chains using ADP-glucose. The polypeptide is Glycogen synthase (Glaesserella parasuis serovar 5 (strain SH0165) (Haemophilus parasuis)).